Here is a 336-residue protein sequence, read N- to C-terminus: NADH-quinone oxidoreductase subunit H (336 aa).

The next 8 helical transmembrane spans lie at 12–32 (FLKI…LTWF), 84–104 (VVMA…GPGF), 118–138 (VNIA…GTIF), 156–176 (AAVV…VILL), 193–213 (GVWF…CMLA), 247–267 (LAEW…LFFG), 274–294 (IFGP…LVFF), and 313–333 (IAWK…AVVV).

It belongs to the complex I subunit 1 family. NDH-1 is composed of 14 different subunits. Subunits NuoA, H, J, K, L, M, N constitute the membrane sector of the complex.

It is found in the cell inner membrane. The enzyme catalyses a quinone + NADH + 5 H(+)(in) = a quinol + NAD(+) + 4 H(+)(out). Functionally, NDH-1 shuttles electrons from NADH, via FMN and iron-sulfur (Fe-S) centers, to quinones in the respiratory chain. The immediate electron acceptor for the enzyme in this species is believed to be ubiquinone. Couples the redox reaction to proton translocation (for every two electrons transferred, four hydrogen ions are translocated across the cytoplasmic membrane), and thus conserves the redox energy in a proton gradient. This subunit may bind ubiquinone. The polypeptide is NADH-quinone oxidoreductase subunit H (Aquifex aeolicus (strain VF5)).